An 80-amino-acid chain; its full sequence is Putative membrane protein insertion efficiency factor (80 aa).

Belongs to the UPF0161 family.

The protein localises to the cell inner membrane. Could be involved in insertion of integral membrane proteins into the membrane. The polypeptide is Putative membrane protein insertion efficiency factor (Kosmotoga olearia (strain ATCC BAA-1733 / DSM 21960 / TBF 19.5.1)).